A 421-amino-acid polypeptide reads, in one-letter code: Histidine--tRNA ligase (421 aa).

It belongs to the class-II aminoacyl-tRNA synthetase family. As to quaternary structure, homodimer.

The protein localises to the cytoplasm. It carries out the reaction tRNA(His) + L-histidine + ATP = L-histidyl-tRNA(His) + AMP + diphosphate + H(+). This is Histidine--tRNA ligase from Coxiella burnetii (strain CbuG_Q212) (Coxiella burnetii (strain Q212)).